We begin with the raw amino-acid sequence, 172 residues long: uncharacterized protein (172 aa).

Disordered stretches follow at residues 1-54 and 82-111; these read MPRR…GGSS and ITGG…SVPE. The segment covering 14–29 has biased composition (low complexity); sequence AAPARSASTAAALPPR. Over residues 30–47 the composition is skewed to pro residues; the sequence is TMAPPPAPSRVQQAPPPT. Residues 89–109 show a composition bias toward polar residues; the sequence is SGSNNAPADTSVPQSSYSNSV.

This is an uncharacterized protein from Schizosaccharomyces pombe (strain 972 / ATCC 24843) (Fission yeast).